Consider the following 211-residue polypeptide: Endo-1,4-beta-xylanase 6 (211 aa).

A signal peptide spans 1 to 16 (MKVTAAFAGLLVTALA). A GH11 domain is found at 19 to 210 (APEPVLVSRS…GAGSASVTIS (192 aa)). Catalysis depends on glutamate 106, which acts as the Nucleophile. Glutamate 197 (proton donor) is an active-site residue.

Belongs to the glycosyl hydrolase 11 (cellulase G) family.

It localises to the secreted. It catalyses the reaction Endohydrolysis of (1-&gt;4)-beta-D-xylosidic linkages in xylans.. Its pathway is glycan degradation; xylan degradation. In terms of biological role, endo-1,4-beta-xylanase involved in the hydrolysis of xylan, a major structural heterogeneous polysaccharide found in plant biomass representing the second most abundant polysaccharide in the biosphere, after cellulose. This is Endo-1,4-beta-xylanase 6 (XYN6) from Aspergillus niger.